A 375-amino-acid chain; its full sequence is 4,4'-diaponeurosporenoate glycosyltransferase (375 aa).

4 helical membrane-spanning segments follow: residues 3-23 (WLSRILTVIVTMSMACGALIF), 164-184 (FYEGFSAIFNLMTVVGMNVFS), 277-297 (IMTAIVLWLFGSIASILGLCL), and 330-350 (FSNLLMVCHPLLFMFFTKIFI).

The protein belongs to the glycosyltransferase 2 family. CrtQ subfamily.

It localises to the cell membrane. The protein operates within carotenoid biosynthesis; staphyloxanthin biosynthesis; staphyloxanthin from farnesyl diphosphate: step 4/5. Its function is as follows. Catalyzes the glycosylation of 4,4'-diaponeurosporenoate, i.e. the esterification of glucose at the C1'' position with the carboxyl group of 4,4'-diaponeurosporenic acid, to form glycosyl-4,4'-diaponeurosporenoate. This is a step in the biosynthesis of staphyloxanthin, an orange pigment present in most staphylococci strains. This chain is 4,4'-diaponeurosporenoate glycosyltransferase (crtQ), found in Staphylococcus aureus (strain USA300).